A 231-amino-acid polypeptide reads, in one-letter code: Large ribosomal subunit protein uL1 (231 aa).

Belongs to the universal ribosomal protein uL1 family. As to quaternary structure, part of the 50S ribosomal subunit.

Its function is as follows. Binds directly to 23S rRNA. The L1 stalk is quite mobile in the ribosome, and is involved in E site tRNA release. In terms of biological role, protein L1 is also a translational repressor protein, it controls the translation of the L11 operon by binding to its mRNA. The sequence is that of Large ribosomal subunit protein uL1 from Carboxydothermus hydrogenoformans (strain ATCC BAA-161 / DSM 6008 / Z-2901).